The primary structure comprises 220 residues: Iron-sulfur cluster repair protein YtfE (220 aa).

It belongs to the RIC family. YtfE subfamily. Homodimer.

The protein resides in the cytoplasm. Functionally, di-iron-containing protein involved in the repair of iron-sulfur clusters damaged by oxidative and nitrosative stress conditions. The chain is Iron-sulfur cluster repair protein YtfE from Escherichia coli O8 (strain IAI1).